The sequence spans 536 residues: Probable cytochrome P450 12a5, mitochondrial (536 aa).

C482 lines the heme pocket.

This sequence belongs to the cytochrome P450 family. Heme serves as cofactor.

The protein localises to the mitochondrion membrane. This is Probable cytochrome P450 12a5, mitochondrial (Cyp12a5) from Drosophila melanogaster (Fruit fly).